The primary structure comprises 201 residues: Retinol binding protein 4 (201 aa).

Positions 1–18 (MAWVWALVLLAALGSARA) are cleaved as a signal peptide. 3 cysteine pairs are disulfide-bonded: Cys-22–Cys-178, Cys-88–Cys-192, and Cys-138–Cys-147. Gln-116 contributes to the substrate binding site. Arg-139 carries the omega-N-methylarginine modification.

It belongs to the calycin superfamily. Lipocalin family. Interacts with TTR. Interaction with TTR prevents its loss by filtration through the kidney glomeruli. Interacts with STRA6. In terms of tissue distribution, highly expressed in liver. Also expressed in adipose tissue. Expressed by endometrium from days 16-25 and by unattached chorioallantois from days 30-36 during pregnancy.

It localises to the secreted. Functionally, retinol-binding protein that mediates retinol transport in blood plasma. Delivers retinol from the liver stores to the peripheral tissues. Transfers the bound all-trans retinol to STRA6, that then facilitates retinol transport across the cell membrane. The protein is Retinol binding protein 4 of Felis catus (Cat).